Reading from the N-terminus, the 131-residue chain is UPF0102 protein YraN (131 aa).

Residues 1 to 19 (MATVPTRSGSPRQLTTKQT) show a composition bias toward polar residues. Residues 1 to 21 (MATVPTRSGSPRQLTTKQTGD) are disordered.

This sequence belongs to the UPF0102 family.

In Escherichia coli O45:K1 (strain S88 / ExPEC), this protein is UPF0102 protein YraN.